The chain runs to 167 residues: Ureidoglycolate lyase (167 aa).

This sequence belongs to the ureidoglycolate lyase family. As to quaternary structure, homodimer. The cofactor is Ni(2+).

The enzyme catalyses (S)-ureidoglycolate = urea + glyoxylate. Its pathway is nitrogen metabolism; (S)-allantoin degradation. Catalyzes the catabolism of the allantoin degradation intermediate (S)-ureidoglycolate, generating urea and glyoxylate. Involved in the utilization of allantoin as nitrogen source. This chain is Ureidoglycolate lyase, found in Pseudomonas fluorescens (strain SBW25).